A 214-amino-acid chain; its full sequence is 2-phospho-L-lactate guanylyltransferase (214 aa).

The protein belongs to the CofC family. Homodimer.

The enzyme catalyses (2S)-2-phospholactate + GTP + H(+) = (2S)-lactyl-2-diphospho-5'-guanosine + diphosphate. The protein operates within cofactor biosynthesis; coenzyme F420 biosynthesis. Functionally, guanylyltransferase that catalyzes the activation of (2S)-2-phospholactate (2-PL) as (2S)-lactyl-2-diphospho-5'-guanosine, via the condensation of 2-PL with GTP. It is involved in the biosynthesis of coenzyme F420, a hydride carrier cofactor. In Methanoregula boonei (strain DSM 21154 / JCM 14090 / 6A8), this protein is 2-phospho-L-lactate guanylyltransferase.